Consider the following 1124-residue polypeptide: MFTLDGDSSDYFDDDLGDLGVDRPSDATDPDTPPPAKRRRLRAGKDASNADLQSHQKPRAERGDGARTALSSDSFIDYDDDEVPSPERESPYFQDDSEREARSKYKVFAPKNANIQENIFVTQLTQPPSPPEMLRGPRWKKPDPGLPTRTVATPLPETTQSRESAAGDRDDEYDDDEEMKAAIEASLQSFEEETSRPAPSVPLQKPPSSTPIIGQQSTTIEASNDLLDDIPDDAFDSDLSMSPPPAPQPRPAARSFTQSTNRPLGVRQTTLFGMVARNPENQPPRGEQVYSPPEKSEPPTQHKLNQEALGTWVYPTNLGKTRDYQFNIAQKGLFHNLLVALPTGLGKTFIAATIMLNWFRWTKDAQIVFVAPTKPLVAQQISACFEVAGIPRSQTTMLTGEAAPGIRAEEWKAKRVFFMTPQTLINDLKTGIADPKRIVLVVVDEAHRATGGYAYVEVVKFLRRYNQSFRVLALTATPGSTVESVQAVIDGLDISRVEIRTEQSLDIREYVHSKDTDVQTFQNSEEMVLCMDLMSKALQPLLDQLRSTNAYWGRDPMGLTAYGLTKARQQWMLSDSGRNAHFGVKAKMNAIFTVLASLAHGIDLLKYHGITPFYRHLLHFQSNTEGQKGGKYQRQVVQDESYKKLMNHLQPWTKNPEFIGHPKLEYLKQVVLNHFMDAGEGSGADENKDQPATRVMIFVHFRDSAEEVTRVLKRYEPMIRPHVFVGQSSAKGSEGMGQKTQLDIVQKFKKGTYNTIVATSIGEEGLDIGEVDLIVCYDSSASPIRMLQRMGRTGRKRSGKITLLLMQGKEEESYIKAKDNYEKMQQMIASGTRFTFHDDMSPRILPPGVRPVADKRAIDIPEENTVRDLPEPKRRGRAPKRPPKKFHMPDNVETGFTTASHLAGTSKRRVPNKSKARTPTPEPVELPALEDVLLTPAQQKELELHYSNAGPSEELLVSYPRSDAFPRLQLAPRPTKAVRHGSLTRRMIETLQKMDQITPDCGDRYKGILAREKASMPKASIVAPKPNGRGEAQSRTKARHTSKVVSSKSRNQEEQDVTEVQRTPPGKHSVSATNAEVEPFYCSQRTQDGDTDDDFDLPDVSTLLNRSVERPSTRGRFVLDDSDD.

Disordered regions lie at residues methionine 1 to serine 103 and glutamine 123 to histidine 302. Composition is skewed to acidic residues over residues aspartate 7–glycine 17 and arginine 169–glutamate 178. A compositionally biased stretch (polar residues) spans threonine 210 to alanine 222. Positions leucine 226–aspartate 236 are enriched in acidic residues. The segment covering serine 255–leucine 271 has biased composition (polar residues). Residues isoleucine 328–arginine 496 form the Helicase ATP-binding domain. Leucine 341–threonine 348 contributes to the ATP binding site. Positions aspartate 444 to histidine 447 match the DEAH box motif. The Helicase C-terminal domain maps to tyrosine 666–methionine 840. The segment covering lysine 855–lysine 873 has biased composition (basic and acidic residues). Disordered regions lie at residues lysine 855 to proline 923 and methionine 1016 to aspartate 1124. 2 stretches are compositionally biased toward basic residues: residues arginine 874–phenylalanine 886 and serine 906–alanine 916.

It belongs to the DEAD box helicase family. DEAH subfamily. FANCM sub-subfamily. As to quaternary structure, interacts with the MHF histone-fold complex to form the FANCM-MHF complex.

It is found in the nucleus. The catalysed reaction is ATP + H2O = ADP + phosphate + H(+). ATP-dependent DNA helicase involved in DNA damage repair by homologous recombination and in genome maintenance. Capable of unwinding D-loops. Plays a role in limiting crossover recombinants during mitotic DNA double-strand break (DSB) repair. Component of a FANCM-MHF complex which promotes gene conversion at blocked replication forks, probably by reversal of the stalled fork. The chain is ATP-dependent DNA helicase mph1 from Aspergillus niger (strain ATCC MYA-4892 / CBS 513.88 / FGSC A1513).